A 201-amino-acid chain; its full sequence is Small ribosomal subunit protein uS4 (201 aa).

The segment at 1–42 (MARYTGPVTRKSRRLGTDLVGGDQSFEKRPYPPGQHGRARIK) is disordered. The S4 RNA-binding domain maps to 91–157 (SRLDNVVYRA…VPFQIARETA (67 aa)).

It belongs to the universal ribosomal protein uS4 family. In terms of assembly, part of the 30S ribosomal subunit. Contacts protein S5. The interaction surface between S4 and S5 is involved in control of translational fidelity.

In terms of biological role, one of the primary rRNA binding proteins, it binds directly to 16S rRNA where it nucleates assembly of the body of the 30S subunit. With S5 and S12 plays an important role in translational accuracy. The polypeptide is Small ribosomal subunit protein uS4 (Mycobacterium marinum (strain ATCC BAA-535 / M)).